The chain runs to 338 residues: UDP-glucose 4-epimerase (338 aa).

NAD(+)-binding positions include 16-17, 37-42, 59-60, 81-85, T126, Y153, K157, and F181; these read YI, IDINHT, NL, and FAAKT. The substrate site is built by T126 and Y153. Y153 (proton acceptor) is an active-site residue. Substrate contacts are provided by residues N182, 198–199, 215–217, R230, and 294–297; these read TL, FLY, and RAGD.

The protein belongs to the NAD(P)-dependent epimerase/dehydratase family. In terms of assembly, homodimer. It depends on NAD(+) as a cofactor.

It catalyses the reaction UDP-alpha-D-glucose = UDP-alpha-D-galactose. The protein operates within carbohydrate metabolism; galactose metabolism. Involved in the metabolism of galactose. Catalyzes the conversion of UDP-galactose (UDP-Gal) to UDP-glucose (UDP-Glc) through a mechanism involving the transient reduction of NAD. The chain is UDP-glucose 4-epimerase (galE) from Mycoplasma pneumoniae (strain ATCC 29342 / M129 / Subtype 1) (Mycoplasmoides pneumoniae).